The primary structure comprises 477 residues: Mitochondrial adenyl nucleotide antiporter SLC25A24 (477 aa).

The tract at residues methionine 1–aspartate 173 is regulatory N-terminal domain. The Mitochondrial intermembrane portion of the chain corresponds to methionine 1–glutamine 197. EF-hand domains are found at residues glutamate 19–proline 54, leucine 55–glutamate 88, aspartate 86–threonine 121, and isoleucine 122–threonine 157. Ca(2+) contacts are provided by aspartate 32, asparagine 34, aspartate 36, valine 38, glutamate 43, aspartate 68, asparagine 70, aspartate 72, lysine 74, glutamate 79, aspartate 99, asparagine 101, aspartate 103, lysine 105, glutamate 110, aspartate 135, aspartate 137, threonine 139, threonine 141, and glutamate 146. Residues isoleucine 159–histidine 168 are linker region. Residues isoleucine 174–lysine 477 form a C-terminal transmembrane transporter domain region. 3 Solcar repeats span residues glycine 192 to leucine 278, isoleucine 286 to tyrosine 371, and proline 383 to threonine 471. A helical transmembrane segment spans residues leucine 198–leucine 215. Residues aspartate 216–arginine 252 lie on the Mitochondrial matrix side of the membrane. Residues glycine 253–tyrosine 272 traverse the membrane as a helical segment. Residues glutamate 273–glycine 295 are Mitochondrial intermembrane-facing. A helical membrane pass occupies residues serine 296–methionine 309. Residues glutamate 310–lysine 345 are Mitochondrial matrix-facing. N6-acetyllysine; alternate is present on lysine 320. Lysine 320 carries the N6-succinyllysine; alternate modification. N6-acetyllysine is present on lysine 336. The chain crosses the membrane as a helical span at residues glycine 346 to tyrosine 365. At glutamate 366–leucine 388 the chain is on the mitochondrial intermembrane side. A helical transmembrane segment spans residues leucine 389–leucine 406. At alanine 407–arginine 445 the chain is on the mitochondrial matrix side. Residue lysine 437 is modified to N6-acetyllysine; alternate. At lysine 437 the chain carries N6-succinyllysine; alternate. A helical membrane pass occupies residues glycine 446 to tyrosine 465. Residues glutamate 466 to lysine 477 lie on the Mitochondrial intermembrane side of the membrane.

This sequence belongs to the mitochondrial carrier (TC 2.A.29) family. In terms of assembly, monomer. In terms of tissue distribution, expressed in all tissues tested. Highly expressed in testis, expressed at intermediate level in small intestine and pancreas, and weakly expressed in kidney, spleen, liver, skeletal muscle and heart.

Its subcellular location is the mitochondrion inner membrane. The enzyme catalyses Mg(2+)(out) + phosphate(in) + ATP(out) = Mg(2+)(in) + phosphate(out) + ATP(in). It catalyses the reaction ADP(out) + phosphate(in) + H(+)(out) = ADP(in) + phosphate(out) + H(+)(in). It carries out the reaction AMP(out) + phosphate(in) = AMP(in) + phosphate(out). The catalysed reaction is phosphate(in) + ATP(out) + 2 H(+)(out) = phosphate(out) + ATP(in) + 2 H(+)(in). The enzyme catalyses dADP(in) + ADP(out) = dADP(out) + ADP(in). It catalyses the reaction Mg(2+)(in) + ADP(out) + ATP(in) + H(+)(out) = Mg(2+)(out) + ADP(in) + ATP(out) + H(+)(in). It carries out the reaction ADP(out) + diphosphate(in) = ADP(in) + diphosphate(out). The catalysed reaction is dAMP(in) + ADP(out) + H(+)(out) = dAMP(out) + ADP(in) + H(+)(in). The enzyme catalyses 3'-AMP(in) + ADP(out) + H(+)(out) = 3'-AMP(out) + ADP(in) + H(+)(in). It catalyses the reaction dAMP(out) + phosphate(in) = dAMP(in) + phosphate(out). It carries out the reaction 3'-AMP(out) + phosphate(in) = 3'-AMP(in) + phosphate(out). The catalysed reaction is dADP(out) + phosphate(in) + H(+)(out) = dADP(in) + phosphate(out) + H(+)(in). Activated by an increase in cytosolic calcium levels that induce a conformational change of the N-terminal regulatory domain, uncapping the channel and allowing transport. Inhibited by bathophenanthroline, mersalyl, p-hydroxymercuribenzoate, bromcresol purple and tannic acid. Functionally, electroneutral antiporter that mediates the transport of adenyl nucleotides through the inner mitochondrial membrane. Originally identified as an ATP-magnesium/inorganic phosphate antiporter, it also acts as a broad specificity adenyl nucleotide antiporter. By regulating the mitochondrial matrix adenyl nucleotide pool could adapt to changing cellular energetic demands and indirectly regulate adenyl nucleotide-dependent metabolic pathways. In vitro, a low activity is also observed with guanyl and pyrimidine nucleotides. May play a role in protecting cells against oxidative stress-induced cell death, by buffering calcium levels in the mitochondrial matrix through the formation of calcium-phosphate precipitates. This is Mitochondrial adenyl nucleotide antiporter SLC25A24 from Homo sapiens (Human).